The primary structure comprises 892 residues: Major core protein OPG136 precursor (892 aa).

The propeptide occupies 616–698; that stretch reads SPEGEETIIC…ILDRIITNAG (83 aa).

This sequence belongs to the orthopxvirus protein OPG136 family. In terms of assembly, interacts with P39/A4. Post-translationally, the precursor is cleaved by OPG083 to give rise to the 62 kDa mature protein during virion maturation. Proteolytic cleavage of major core proteins OPG136, OPG129, and OPG098, which occurs at a late stage of core formation, is required for production of infectious mature virions (MV).

The protein resides in the virion. Its function is as follows. Core protein 4a is the most abundant virion protein. Major component of the virion core that undergoes proteolytic processing during the immature virion (IV) to mature virion (MV) transition. In Homo sapiens (Human), this protein is Major core protein OPG136 precursor (OPG136).